The chain runs to 216 residues: Elongation factor 1-beta (216 aa).

The tract at residues 71–131 is disordered; it reads GQASGVSASS…AKKKESGKSS (61 aa). A compositionally biased stretch (low complexity) spans 73–89; it reads ASGVSASSAPAAAAPAA. Over residues 92-107 the composition is skewed to acidic residues; sequence DEDDDDDMDLFGDETE. Residues 108 to 128 are compositionally biased toward basic and acidic residues; that stretch reads EDKKAAAEREAAKPAKKKESG.

This sequence belongs to the EF-1-beta/EF-1-delta family. In terms of assembly, EF-1 is composed of 4 subunits: alpha, beta (1B-alpha=beta'), delta (1B-beta), and gamma (1B-gamma).

EF-1-beta and EF-1-beta' stimulate the exchange of GDP bound to EF-1-alpha to GTP. This is Elongation factor 1-beta from Triticum aestivum (Wheat).